Reading from the N-terminus, the 601-residue chain is Elongation factor 4 (601 aa).

Residues 7–189 (DNIRNFSIVA…AIVKRLPPPK (183 aa)) form the tr-type G domain. GTP contacts are provided by residues 19-24 (DHGKST) and 136-139 (NKVD).

It belongs to the TRAFAC class translation factor GTPase superfamily. Classic translation factor GTPase family. LepA subfamily.

The protein resides in the cell inner membrane. It carries out the reaction GTP + H2O = GDP + phosphate + H(+). Required for accurate and efficient protein synthesis under certain stress conditions. May act as a fidelity factor of the translation reaction, by catalyzing a one-codon backward translocation of tRNAs on improperly translocated ribosomes. Back-translocation proceeds from a post-translocation (POST) complex to a pre-translocation (PRE) complex, thus giving elongation factor G a second chance to translocate the tRNAs correctly. Binds to ribosomes in a GTP-dependent manner. This is Elongation factor 4 from Methylorubrum populi (strain ATCC BAA-705 / NCIMB 13946 / BJ001) (Methylobacterium populi).